The following is a 431-amino-acid chain: Adenylosuccinate lyase (431 aa).

N(6)-(1,2-dicarboxyethyl)-AMP contacts are provided by residues 4–5 (RY), 67–69 (RHD), and 93–94 (TS). His-141 functions as the Proton donor/acceptor in the catalytic mechanism. N(6)-(1,2-dicarboxyethyl)-AMP is bound at residue Gln-212. The Proton donor/acceptor role is filled by Ser-262. N(6)-(1,2-dicarboxyethyl)-AMP contacts are provided by residues Ser-263, 268–270 (KRN), and 307–311 (SVERV).

The protein belongs to the lyase 1 family. Adenylosuccinate lyase subfamily. Homooligomer. Residues from neighboring subunits contribute catalytic and substrate-binding residues to each active site.

It carries out the reaction N(6)-(1,2-dicarboxyethyl)-AMP = fumarate + AMP. The enzyme catalyses (2S)-2-[5-amino-1-(5-phospho-beta-D-ribosyl)imidazole-4-carboxamido]succinate = 5-amino-1-(5-phospho-beta-D-ribosyl)imidazole-4-carboxamide + fumarate. It functions in the pathway purine metabolism; AMP biosynthesis via de novo pathway; AMP from IMP: step 2/2. It participates in purine metabolism; IMP biosynthesis via de novo pathway; 5-amino-1-(5-phospho-D-ribosyl)imidazole-4-carboxamide from 5-amino-1-(5-phospho-D-ribosyl)imidazole-4-carboxylate: step 2/2. Its function is as follows. Catalyzes two reactions in de novo purine nucleotide biosynthesis. Catalyzes the breakdown of 5-aminoimidazole- (N-succinylocarboxamide) ribotide (SAICAR or 2-[5-amino-1-(5-phospho-beta-D-ribosyl)imidazole-4-carboxamido]succinate) to 5-aminoimidazole-4-carboxamide ribotide (AICAR or 5-amino-1-(5-phospho-beta-D-ribosyl)imidazole-4-carboxamide) and fumarate, and of adenylosuccinate (ADS or N(6)-(1,2-dicarboxyethyl)-AMP) to adenosine monophosphate (AMP) and fumarate. The polypeptide is Adenylosuccinate lyase (purB) (Synechocystis sp. (strain ATCC 27184 / PCC 6803 / Kazusa)).